We begin with the raw amino-acid sequence, 129 residues long: Protein NrdI (129 aa).

It belongs to the NrdI family.

In terms of biological role, probably involved in ribonucleotide reductase function. This is Protein NrdI from Macrococcus caseolyticus (strain JCSC5402) (Macrococcoides caseolyticum).